The following is a 746-amino-acid chain: NAD(P)H-quinone oxidoreductase subunit 5, chloroplastic (746 aa).

Transmembrane regions (helical) follow at residues 9–29 (WIIP…LLLF), 40–60 (WTFL…YLSI), 89–109 (IDPL…LVLI), 125–145 (FAYM…SNLI), 147–167 (VYFF…FWFT), 185–205 (GDFG…SFEF), 221–241 (VNLL…IAKS), 258–278 (TPIS…FLVA), 280–300 (LLPL…IGII), 327–347 (LGYM…FHLI), 354–374 (ALLF…VGYS), 396–416 (TAFL…CFWS), 425–445 (LLFS…TAFY), 547–567 (ILFP…IGIP), 608–628 (FSVS…KPFY), and 723–743 (YLFL…FFYF).

Belongs to the complex I subunit 5 family. In terms of assembly, NDH is composed of at least 16 different subunits, 5 of which are encoded in the nucleus.

The protein resides in the plastid. It is found in the chloroplast thylakoid membrane. The enzyme catalyses a plastoquinone + NADH + (n+1) H(+)(in) = a plastoquinol + NAD(+) + n H(+)(out). It carries out the reaction a plastoquinone + NADPH + (n+1) H(+)(in) = a plastoquinol + NADP(+) + n H(+)(out). Its function is as follows. NDH shuttles electrons from NAD(P)H:plastoquinone, via FMN and iron-sulfur (Fe-S) centers, to quinones in the photosynthetic chain and possibly in a chloroplast respiratory chain. The immediate electron acceptor for the enzyme in this species is believed to be plastoquinone. Couples the redox reaction to proton translocation, and thus conserves the redox energy in a proton gradient. This Lepidium virginicum (Virginia pepperweed) protein is NAD(P)H-quinone oxidoreductase subunit 5, chloroplastic (ndhF).